A 379-amino-acid polypeptide reads, in one-letter code: 2-methylcitrate synthase (379 aa).

H187 serves as a coordination point for substrate. The active site involves H222. CoA is bound at residue 264 to 268; sequence KVMGF. Residue H270 is part of the active site. Residue R279 coordinates substrate. Residue D321 is part of the active site. Positions 346 and 365 each coordinate substrate.

The protein belongs to the citrate synthase family. Homodimer.

The catalysed reaction is propanoyl-CoA + oxaloacetate + H2O = (2S,3S)-2-methylcitrate + CoA + H(+). It carries out the reaction oxaloacetate + acetyl-CoA + H2O = citrate + CoA + H(+). It participates in organic acid metabolism; propanoate degradation. Its pathway is carbohydrate metabolism; tricarboxylic acid cycle; isocitrate from oxaloacetate: step 1/2. Involved in the catabolism of short chain fatty acids (SCFA) via the tricarboxylic acid (TCA)(acetyl degradation route) and via the 2-methylcitrate cycle I (propionate degradation route). Catalyzes the Claisen condensation of propionyl-CoA and oxaloacetate (OAA) to yield 2-methylcitrate (2-MC) and CoA. Also catalyzes the condensation of oxaloacetate with acetyl-CoA but with a lower specificity. The polypeptide is 2-methylcitrate synthase (gltA) (Antarctic bacterium DS2-3R).